The primary structure comprises 497 residues: MTKHIIVIGGGLGGISAAIRMAQSGYSVSLYEQNNHIGGKVNRHESDGFGFDLGPSILTMPYIFEKLFEYSKKQMSDYVTIKRLPHQWRSFFPDGTTIDLYEGIKETGQHNAILSKQDIEELQNYLNYTRRIDRITEKGYFNYGLDTLSQIIKFHGPLNALINYDYVHTMQQAIDKRISNPYLRQMLGYFIKYVGSSSYDAPAVLSMLFHMQQEQGLWYVEGGIHHLANALEKLAREEGVTIHTGARVDNIKTYQRRVTGVRLDTGEFVKADYIISNMEVIPTYKYLIHLDTQRLNKLEREFEPASSGYVMHLGVACQYPQLAHHNFFFTENAYLNYQQVFHEKVLPDDPTIYLVNTNKTDHTQAPVGYENIKVLPHIPYIQDQPFTTEDYAKFRDKILDKLEKMGLTDLRKHIIYEDVWTPEDIEKNYRSNRGAIYGVVADKKKNKGFKFPKESQYFENLYFVGGSVNPGGGMPMVTLSGQQVADKINAREAKNRK.

Residue 7–19 participates in FAD binding; that stretch reads VIGGGLGGISAAI.

It belongs to the carotenoid/retinoid oxidoreductase family. CrtP subfamily. It depends on FAD as a cofactor.

It catalyses the reaction all-trans-4,4'-diaponeurosporene + 2 AH2 + 2 O2 = 4,4'-diaponeurosporenal + 2 A + 3 H2O. It functions in the pathway carotenoid biosynthesis; staphyloxanthin biosynthesis; staphyloxanthin from farnesyl diphosphate: step 3/5. In terms of biological role, involved in the biosynthesis of the yellow-orange carotenoid staphyloxanthin, which plays a role in the virulence via its protective function against oxidative stress. Catalyzes the oxidation of the terminal methyl side group of 4,4'-diaponeurosporene to form 4,4'-diaponeurosporen-4-al. The protein is 4,4'-diaponeurosporene oxygenase of Staphylococcus aureus (strain USA300).